We begin with the raw amino-acid sequence, 484 residues long: 3-isopropylmalate dehydratase large subunit (484 aa).

3 residues coordinate [4Fe-4S] cluster: Cys-352, Cys-412, and Cys-415. Positions 462–484 are disordered; that stretch reads GTLSSPSDLDPAPESAAVSSSAA.

This sequence belongs to the aconitase/IPM isomerase family. LeuC type 1 subfamily. In terms of assembly, heterodimer of LeuC and LeuD. The cofactor is [4Fe-4S] cluster.

It carries out the reaction (2R,3S)-3-isopropylmalate = (2S)-2-isopropylmalate. The protein operates within amino-acid biosynthesis; L-leucine biosynthesis; L-leucine from 3-methyl-2-oxobutanoate: step 2/4. In terms of biological role, catalyzes the isomerization between 2-isopropylmalate and 3-isopropylmalate, via the formation of 2-isopropylmaleate. This is 3-isopropylmalate dehydratase large subunit from Arthrobacter sp. (strain FB24).